Consider the following 377-residue polypeptide: Nitric oxide reductase FlRd-NAD(+) reductase (377 aa).

It belongs to the FAD-dependent oxidoreductase family. It depends on FAD as a cofactor.

It is found in the cytoplasm. It catalyses the reaction 2 reduced [nitric oxide reductase rubredoxin domain] + NAD(+) + H(+) = 2 oxidized [nitric oxide reductase rubredoxin domain] + NADH. It functions in the pathway nitrogen metabolism; nitric oxide reduction. Its function is as follows. One of at least two accessory proteins for anaerobic nitric oxide (NO) reductase. Reduces the rubredoxin moiety of NO reductase. The polypeptide is Nitric oxide reductase FlRd-NAD(+) reductase (Escherichia coli O17:K52:H18 (strain UMN026 / ExPEC)).